The chain runs to 243 residues: Probable transcriptional regulator ycf27 (243 aa).

A Response regulatory domain is found at 7–120 (KILVVDDEAS…ELEARIRSVL (114 aa)). D56 carries the post-translational modification 4-aspartylphosphate. The H-T-H motif DNA-binding region spans 76-94 (DVPIIMLTALGEVCDRITG). Positions 135–236 (SGIISIGFLK…ARGTGYLFQR (102 aa)) form a DNA-binding region, ompR/PhoB-type.

It localises to the plastid. The protein localises to the chloroplast. In terms of biological role, probable promoter-specific protein mediating the interaction between DNA and RNA polymerase. This is Probable transcriptional regulator ycf27 (ycf27) from Porphyra purpurea (Red seaweed).